The primary structure comprises 180 residues: Translation initiation factor IF-3 (180 aa).

It belongs to the IF-3 family. Monomer.

It is found in the cytoplasm. In terms of biological role, IF-3 binds to the 30S ribosomal subunit and shifts the equilibrium between 70S ribosomes and their 50S and 30S subunits in favor of the free subunits, thus enhancing the availability of 30S subunits on which protein synthesis initiation begins. The chain is Translation initiation factor IF-3 from Xylella fastidiosa (strain Temecula1 / ATCC 700964).